The following is a 116-amino-acid chain: U16-barytoxin-Tl1a (116 aa).

A signal peptide spans 1–20 (MKTIIVFLSLLVLATKFGDA). Positions 21–74 (KEGVNQKQKKEVTQNEFREEYLNEMAAMSLVQQLEAIERALFENEAGRNSRQKR) are excised as a propeptide. 3 disulfide bridges follow: Cys75–Cys90, Cys82–Cys95, and Cys89–Cys110.

The protein belongs to the neurotoxin 14 (magi-1) family. 06 (ICK-Trit) subfamily. Expressed by the venom gland.

The protein localises to the secreted. In terms of biological role, ion channel inhibitor. This Trittame loki (Brush-footed trapdoor spider) protein is U16-barytoxin-Tl1a.